The primary structure comprises 250 residues: 5'-nucleotidase SurE (250 aa).

Asp-9, Asp-10, Ser-40, and Asn-92 together coordinate a divalent metal cation.

This sequence belongs to the SurE nucleotidase family. Requires a divalent metal cation as cofactor.

Its subcellular location is the cytoplasm. The enzyme catalyses a ribonucleoside 5'-phosphate + H2O = a ribonucleoside + phosphate. Functionally, nucleotidase that shows phosphatase activity on nucleoside 5'-monophosphates. This chain is 5'-nucleotidase SurE, found in Shewanella pealeana (strain ATCC 700345 / ANG-SQ1).